The sequence spans 140 residues: Ig heavy chain V region 93G7 (140 aa).

An N-terminal signal peptide occupies residues 1–19 (MGWSFIFLFLLSVTAGVHS). An Ig-like domain is found at 20–139 (EVQLQQSGAE…WGQGTPLTVS (120 aa)).

This Mus musculus (Mouse) protein is Ig heavy chain V region 93G7.